We begin with the raw amino-acid sequence, 156 residues long: Small ribosomal subunit protein uS7 (156 aa).

Belongs to the universal ribosomal protein uS7 family. In terms of assembly, part of the 30S ribosomal subunit. Contacts proteins S9 and S11.

Functionally, one of the primary rRNA binding proteins, it binds directly to 16S rRNA where it nucleates assembly of the head domain of the 30S subunit. Is located at the subunit interface close to the decoding center, probably blocks exit of the E-site tRNA. The sequence is that of Small ribosomal subunit protein uS7 from Tropheryma whipplei (strain TW08/27) (Whipple's bacillus).